The sequence spans 365 residues: Patr class I histocompatibility antigen, A-108 alpha chain (365 aa).

Positions M1 to A24 are cleaved as a signal peptide. Residues G25–D114 form an alpha-1 region. Over G25–I308 the chain is Extracellular. An N-linked (GlcNAc...) asparagine glycan is attached at N110. The alpha-2 stretch occupies residues G115 to T206. 2 disulfide bridges follow: C125–C188 and C227–C283. The interval D207–W298 is alpha-3. The region spanning P209 to T295 is the Ig-like C1-type domain. The tract at residues E299 to I308 is connecting peptide. A helical membrane pass occupies residues V309–W332. Residues R333–V365 are Cytoplasmic-facing. Residues R339–L360 are disordered. Position 343 is a phosphoserine (S343). Y344 carries the phosphotyrosine modification. Residues Q346–S359 are compositionally biased toward low complexity. Phosphoserine is present on residues S349, S350, S352, S356, and S359.

Belongs to the MHC class I family. Heterodimer of an alpha chain and a beta chain (beta-2-microglobulin).

The protein localises to the membrane. Involved in the presentation of foreign antigens to the immune system. In Pan troglodytes (Chimpanzee), this protein is Patr class I histocompatibility antigen, A-108 alpha chain (Patr-A).